We begin with the raw amino-acid sequence, 295 residues long: Alpha-soluble NSF attachment protein (295 aa).

Met1 carries the N-acetylmethionine modification. Phosphoserine is present on residues Ser26, Ser29, and Ser195.

Belongs to the SNAP family. As to quaternary structure, interacts with PRKCABP, and disrupts the interaction between GRIA2 and PRKCABP, leading to the internalization of GRIA2. Found in a complex with VAMP8. Component of a SNARE-like complex that contains at least ZW10, USE1L, RINT1, STX18 and NAPA/SNAP-alpha. Interacts with VTI1A. Interacts with STX12. Interacts with GNA12 (via N-terminus); the interaction promotes CDH5 localization to plasma membrane.

It localises to the cell membrane. In terms of biological role, required for vesicular transport between the endoplasmic reticulum and the Golgi apparatus. Together with GNA12 promotes CDH5 localization to plasma membrane. This chain is Alpha-soluble NSF attachment protein (NAPA), found in Homo sapiens (Human).